The primary structure comprises 142 residues: Large ribosomal subunit protein uL13 (142 aa).

It belongs to the universal ribosomal protein uL13 family. Part of the 50S ribosomal subunit.

In terms of biological role, this protein is one of the early assembly proteins of the 50S ribosomal subunit, although it is not seen to bind rRNA by itself. It is important during the early stages of 50S assembly. The polypeptide is Large ribosomal subunit protein uL13 (Ectopseudomonas mendocina (strain ymp) (Pseudomonas mendocina)).